A 291-amino-acid chain; its full sequence is Nucleotide-binding protein LJ_0866 (291 aa).

13-20 (GMSGAGKT) is an ATP binding site. Residue 63–66 (DLRV) coordinates GTP.

The protein belongs to the RapZ-like family.

Functionally, displays ATPase and GTPase activities. This is Nucleotide-binding protein LJ_0866 from Lactobacillus johnsonii (strain CNCM I-12250 / La1 / NCC 533).